We begin with the raw amino-acid sequence, 318 residues long: tRNA pseudouridine synthase B (318 aa).

Asp-54 serves as the catalytic Nucleophile.

This sequence belongs to the pseudouridine synthase TruB family. Type 1 subfamily.

The enzyme catalyses uridine(55) in tRNA = pseudouridine(55) in tRNA. In terms of biological role, responsible for synthesis of pseudouridine from uracil-55 in the psi GC loop of transfer RNAs. The protein is tRNA pseudouridine synthase B of Ralstonia pickettii (strain 12J).